The following is a 239-amino-acid chain: Dolichyldiphosphatase (239 aa).

Residues Met-1 to Ser-34 lie on the Lumenal side of the membrane. The helical transmembrane segment at Ala-35 to Thr-55 threads the bilayer. Over Arg-56–Asn-131 the chain is Cytoplasmic. The chain crosses the membrane as a helical span at residues Phe-132–Ser-152. Residues Arg-153 to Val-164 are Lumenal-facing. Residues Ile-165–Ile-185 traverse the membrane as a helical segment. The Cytoplasmic portion of the chain corresponds to Arg-186–Asp-239.

It belongs to the dolichyldiphosphatase family.

Its subcellular location is the endoplasmic reticulum membrane. It carries out the reaction a di-trans,poly-cis-dolichyl diphosphate + H2O = a di-trans,poly-cis-dolichyl phosphate + phosphate + H(+). Its pathway is protein modification; protein glycosylation. Functionally, non-essential protein which is required for efficient N-glycosylation. Necessary for maintaining optimal levels of dolichol-linked oligosaccharides. Hydrolyzes dolichyl pyrophosphate at a very high rate and dolichyl monophosphate at a much lower rate. Does not act on phosphatidate. The polypeptide is Dolichyldiphosphatase (CAX4) (Saccharomyces cerevisiae (strain ATCC 204508 / S288c) (Baker's yeast)).